Consider the following 1521-residue polypeptide: Suppressor of Ty 6 homolog (1521 aa).

A disordered region spans residues Met-1–Val-204. Positions Lys-26–Val-41 are enriched in basic residues. Positions Lys-26 to Val-42 match the Nuclear localization signal motif. Composition is skewed to acidic residues over residues Ser-45 to Glu-56 and Ala-67 to Ala-76. Basic and acidic residues predominate over residues Arg-77–Ile-89. Over residues Asn-90–Glu-103 the composition is skewed to acidic residues. The segment covering Pro-127–Lys-149 has biased composition (basic and acidic residues). The span at Arg-167–Gly-177 shows a compositional bias: acidic residues. The S1 motif domain maps to Leu-1182–Lys-1251. The 90-residue stretch at His-1299–Gln-1388 folds into the SH2 domain. A disordered region spans residues Gly-1490–Arg-1521. A compositionally biased stretch (pro residues) spans Gly-1504–Gln-1513.

Belongs to the SPT6 family. Interacts with glp-1 and lin-12.

Its subcellular location is the nucleus. Functionally, histone H3-H4 chaperone that plays a role in maintenance of chromatin structure during RNA polymerase II transcription elongation. May be required for several aspects of morphogenesis of C.briggsae, including regulation of division in the germline and gut and specification of ventral-uterine precursor cell fate. The sequence is that of Suppressor of Ty 6 homolog (emb-5) from Caenorhabditis briggsae.